A 457-amino-acid chain; its full sequence is Ig mu chain C region (457 aa).

Positions serine 1–glutamine 105 are CH1. A disulfide bond links cysteine 27 and cysteine 89. Residues asparagine 45 and asparagine 113 are each glycosylated (N-linked (GlcNAc...) asparagine). A CH2 region spans residues valine 106–aspartate 220. Cysteine 136 and cysteine 200 form a disulfide bridge. N-linked (GlcNAc...) asparagine glycans are attached at residues asparagine 212, asparagine 276, and asparagine 283. The segment at aspartate 221–lysine 326 is CH3. 2 disulfides stabilise this stretch: cysteine 248–cysteine 307 and cysteine 355–cysteine 417. Residues aspartate 327 to tyrosine 457 form a CH4 region. Asparagine 444 carries an N-linked (GlcNAc...) asparagine glycan.

This is Ig mu chain C region from Suncus murinus (Asian house shrew).